A 119-amino-acid chain; its full sequence is Large ribosomal subunit protein bL20 (119 aa).

This sequence belongs to the bacterial ribosomal protein bL20 family.

Functionally, binds directly to 23S ribosomal RNA and is necessary for the in vitro assembly process of the 50S ribosomal subunit. It is not involved in the protein synthesizing functions of that subunit. This chain is Large ribosomal subunit protein bL20, found in Rhodopseudomonas palustris (strain BisB5).